The chain runs to 270 residues: Phosphatidylglycerol--prolipoprotein diacylglyceryl transferase (270 aa).

4 consecutive transmembrane segments (helical) span residues 19–39 (FPVY…LWLA), 56–76 (LVLI…VIFE), 92–112 (QGGL…ILFA), and 116–136 (GVSF…GQAI). Arginine 138 lines the a 1,2-diacyl-sn-glycero-3-phospho-(1'-sn-glycerol) pocket. A run of 3 helical transmembrane segments spans residues 178–198 (HPTF…LLAL), 206–226 (GELF…VEGL), and 236–256 (LRIA…FIIV).

This sequence belongs to the Lgt family.

Its subcellular location is the cell membrane. The enzyme catalyses L-cysteinyl-[prolipoprotein] + a 1,2-diacyl-sn-glycero-3-phospho-(1'-sn-glycerol) = an S-1,2-diacyl-sn-glyceryl-L-cysteinyl-[prolipoprotein] + sn-glycerol 1-phosphate + H(+). The protein operates within protein modification; lipoprotein biosynthesis (diacylglyceryl transfer). Functionally, catalyzes the transfer of the diacylglyceryl group from phosphatidylglycerol to the sulfhydryl group of the N-terminal cysteine of a prolipoprotein, the first step in the formation of mature lipoproteins. The chain is Phosphatidylglycerol--prolipoprotein diacylglyceryl transferase from Bacillus anthracis (strain A0248).